The primary structure comprises 134 residues: Peroxisomal testis-specific protein 1 (134 aa).

A Microbody targeting signal motif is present at residues Asn131–Leu134.

The protein localises to the peroxisome. In Homo sapiens (Human), this protein is Peroxisomal testis-specific protein 1 (PXT1).